A 490-amino-acid chain; its full sequence is Glutamyl-tRNA(Gln) amidotransferase subunit A (490 aa).

Residues Lys-76 and Ser-151 each act as charge relay system in the active site. Ser-175 (acyl-ester intermediate) is an active-site residue.

It belongs to the amidase family. GatA subfamily. In terms of assembly, heterotrimer of A, B and C subunits.

The enzyme catalyses L-glutamyl-tRNA(Gln) + L-glutamine + ATP + H2O = L-glutaminyl-tRNA(Gln) + L-glutamate + ADP + phosphate + H(+). In terms of biological role, allows the formation of correctly charged Gln-tRNA(Gln) through the transamidation of misacylated Glu-tRNA(Gln) in organisms which lack glutaminyl-tRNA synthetase. The reaction takes place in the presence of glutamine and ATP through an activated gamma-phospho-Glu-tRNA(Gln). The protein is Glutamyl-tRNA(Gln) amidotransferase subunit A of Aromatoleum aromaticum (strain DSM 19018 / LMG 30748 / EbN1) (Azoarcus sp. (strain EbN1)).